A 263-amino-acid chain; its full sequence is Probable septum site-determining protein MinC (263 aa).

Positions 107-159 (LPPSGARERPLDIKDSAPRKPAEEPSPSAGEARPEPAKAEEKPADPVSRPTKV) are disordered. Basic and acidic residues-rich tracts occupy residues 112–129 (ARER…KPAE) and 138–150 (ARPE…EKPA).

Belongs to the MinC family. As to quaternary structure, interacts with MinD and FtsZ.

Cell division inhibitor that blocks the formation of polar Z ring septums. Rapidly oscillates between the poles of the cell to destabilize FtsZ filaments that have formed before they mature into polar Z rings. Prevents FtsZ polymerization. The polypeptide is Probable septum site-determining protein MinC (Pseudomonas aeruginosa (strain UCBPP-PA14)).